Reading from the N-terminus, the 483-residue chain is Glutamyl-tRNA(Gln) amidotransferase subunit A (483 aa).

Active-site charge relay system residues include K76 and S151. The active-site Acyl-ester intermediate is the S175.

This sequence belongs to the amidase family. GatA subfamily. In terms of assembly, heterotrimer of A, B and C subunits.

The catalysed reaction is L-glutamyl-tRNA(Gln) + L-glutamine + ATP + H2O = L-glutaminyl-tRNA(Gln) + L-glutamate + ADP + phosphate + H(+). In terms of biological role, allows the formation of correctly charged Gln-tRNA(Gln) through the transamidation of misacylated Glu-tRNA(Gln) in organisms which lack glutaminyl-tRNA synthetase. The reaction takes place in the presence of glutamine and ATP through an activated gamma-phospho-Glu-tRNA(Gln). In Pseudomonas fluorescens (strain Pf0-1), this protein is Glutamyl-tRNA(Gln) amidotransferase subunit A.